The chain runs to 423 residues: UPF0229 protein PSPTO_0546 (423 aa).

The tract at residues 65–110 is disordered; the sequence is HHGRGGKQTVVHPGNKEFTTGEHIARPQGGAGGKGPGKAGNSGEGM. Positions 93-107 are enriched in gly residues; it reads GGAGGKGPGKAGNSG.

It belongs to the UPF0229 family.

This Pseudomonas syringae pv. tomato (strain ATCC BAA-871 / DC3000) protein is UPF0229 protein PSPTO_0546.